Reading from the N-terminus, the 156-residue chain is MKLFILAVGHKMPGWIASGFDEYTKRMPPELRIELREIKPELRSGGRSAESVMAAERQKIEAALPKGARLVALDERGRDWTTMQLAQALPGWQQDGRDVAFVIGGADGLDPELKARADVLLRISSMTLPHGMVRVLLAEQLYRAWSITQNHPYHRA.

S-adenosyl-L-methionine-binding positions include Leu73, Gly104, and Ile123–Leu128.

Belongs to the RNA methyltransferase RlmH family. In terms of assembly, homodimer.

The protein resides in the cytoplasm. It catalyses the reaction pseudouridine(1915) in 23S rRNA + S-adenosyl-L-methionine = N(3)-methylpseudouridine(1915) in 23S rRNA + S-adenosyl-L-homocysteine + H(+). Functionally, specifically methylates the pseudouridine at position 1915 (m3Psi1915) in 23S rRNA. This is Ribosomal RNA large subunit methyltransferase H from Burkholderia cenocepacia (strain ATCC BAA-245 / DSM 16553 / LMG 16656 / NCTC 13227 / J2315 / CF5610) (Burkholderia cepacia (strain J2315)).